Reading from the N-terminus, the 296-residue chain is NADH-cytochrome b5 reductase 1 (296 aa).

Residues 11–31 form a helical membrane-spanning segment; sequence LSAVLVKFAPFAVAVIAILAA. One can recognise an FAD-binding FR-type domain in the interval 47-152; that stretch reads SEFQNFVLKE…RGPKGAMVYT (106 aa). FAD contacts are provided by residues 132-147 and 158-195; these read TTLK…GPKG and HIGM…KIDL.

This sequence belongs to the flavoprotein pyridine nucleotide cytochrome reductase family. As to quaternary structure, monomer. Component of the 2-(3-amino-3-carboxypropyl)histidine synthase complex composed of dph1, dph2, dph3 and a NADH-dependent reductase, predominantly cbr1. FAD is required as a cofactor.

It localises to the mitochondrion outer membrane. It carries out the reaction 2 Fe(III)-[cytochrome b5] + NADH = 2 Fe(II)-[cytochrome b5] + NAD(+) + H(+). The catalysed reaction is 2 Fe(3+)-[Dph3] + NADH = 2 Fe(2+)-[Dph3] + NAD(+) + H(+). The protein operates within protein modification; peptidyl-diphthamide biosynthesis. In terms of biological role, NADH-dependent reductase for dph3 and cytochrome b5. Required for the first step of diphthamide biosynthesis, a post-translational modification of histidine which occurs in elongation factor 2. Dph1 and dph2 transfer a 3-amino-3-carboxypropyl (ACP) group from S-adenosyl-L-methionine (SAM) to a histidine residue, the reaction is assisted by a reduction system comprising dph3 and a NADH-dependent reductase, predominantly cbr1. By reducing dph3, also involved in the formation of the tRNA wobble base modification mcm5s 2U (5-methoxycarbonylmethyl-2-thiouridine), mediated by the elongator complex. The cytochrome b5/NADH cytochrome b5 reductase electron transfer system supports the catalytic activity of several sterol biosynthetic enzymes. The sequence is that of NADH-cytochrome b5 reductase 1 (cbr1) from Aspergillus terreus (strain NIH 2624 / FGSC A1156).